The chain runs to 520 residues: Apolipoprotein N-acyltransferase (520 aa).

7 helical membrane-spanning segments follow: residues isoleucine 12–phenylalanine 32, aspartate 33–glutamate 53, leucine 58–valine 78, valine 93–isoleucine 113, alanine 122–phenylalanine 142, valine 168–isoleucine 188, and tryptophan 193–serine 213. One can recognise a CN hydrolase domain in the interval alanine 232 to alanine 479. The active-site Proton acceptor is the glutamate 272. Lysine 338 is a catalytic residue. The active-site Nucleophile is cysteine 390. The helical transmembrane segment at threonine 484–methionine 504 threads the bilayer.

This sequence belongs to the CN hydrolase family. Apolipoprotein N-acyltransferase subfamily.

The protein localises to the cell inner membrane. The enzyme catalyses N-terminal S-1,2-diacyl-sn-glyceryl-L-cysteinyl-[lipoprotein] + a glycerophospholipid = N-acyl-S-1,2-diacyl-sn-glyceryl-L-cysteinyl-[lipoprotein] + a 2-acyl-sn-glycero-3-phospholipid + H(+). Its pathway is protein modification; lipoprotein biosynthesis (N-acyl transfer). Its function is as follows. Catalyzes the phospholipid dependent N-acylation of the N-terminal cysteine of apolipoprotein, the last step in lipoprotein maturation. The polypeptide is Apolipoprotein N-acyltransferase (Pasteurella multocida (strain Pm70)).